We begin with the raw amino-acid sequence, 349 residues long: tRNA pseudouridine synthase D (349 aa).

A substrate-binding site is contributed by Phe27. Residue Asp80 is the Nucleophile of the active site. Substrate is bound at residue Asn129. Residues 155-303 (GVPNYFGAQR…VEAARRAMLL (149 aa)) enclose the TRUD domain. Substrate is bound at residue Phe329.

Belongs to the pseudouridine synthase TruD family.

The enzyme catalyses uridine(13) in tRNA = pseudouridine(13) in tRNA. Responsible for synthesis of pseudouridine from uracil-13 in transfer RNAs. This chain is tRNA pseudouridine synthase D, found in Escherichia coli (strain SMS-3-5 / SECEC).